Consider the following 193-residue polypeptide: Bcl-2-like protein 2 (193 aa).

A2 carries the post-translational modification N-acetylalanine. Positions 9–29 (DTRALVADFVGYKLRQKGYVC) match the BH4 motif. A BH1 motif is present at residues 85–104 (ELFQGGPNWGRLVAFFVFGA). Positions 136–151 (DWIHSSGGWAEFTALY) match the BH2 motif. A177 carries the phosphoserine modification.

This sequence belongs to the Bcl-2 family. In terms of assembly, interacts with HIF3A (via C-terminus domain). Interacts with BOP. Expressed (at protein level) in a wide range of tissues with highest levels in brain, spinal cord, testis, pancreas, heart, spleen and mammary glands. Moderate levels found in thymus, ovary and small intestine. Not detected in salivary gland, muscle or liver. Also expressed in cell lines of myeloid, fibroblast and epithelial origin. Not detected in most lymphoid cell lines.

The protein localises to the mitochondrion membrane. Its function is as follows. Promotes cell survival. Blocks dexamethasone-induced apoptosis. Mediates survival of postmitotic Sertoli cells by suppressing death-promoting activity of BAX. The protein is Bcl-2-like protein 2 (BCL2L2) of Homo sapiens (Human).